A 345-amino-acid polypeptide reads, in one-letter code: AA9 family lytic polysaccharide monooxygenase D (345 aa).

The signal sequence occupies residues 1 to 21 (MPSFTSKTLLAALAGAAAVNA). Cu(2+)-binding residues include histidine 22 and histidine 107. A disulfide bridge connects residues cysteine 77 and cysteine 200. Asparagine 160 is a glycosylation site (N-linked (GlcNAc...) asparagine). O2 is bound by residues histidine 186 and glutamine 195. Position 197 (tyrosine 197) interacts with Cu(2+). Residues 315–345 (VQTSTRPISTRPQPTRCPGLGRRHLRKVARA) form a disordered region. Residues 318–327 (STRPISTRPQ) are compositionally biased toward polar residues. Residues 335–345 (GRRHLRKVARA) are compositionally biased toward basic residues.

Belongs to the polysaccharide monooxygenase AA9 family. Requires Cu(2+) as cofactor.

Its subcellular location is the secreted. It carries out the reaction [(1-&gt;4)-beta-D-glucosyl]n+m + reduced acceptor + O2 = 4-dehydro-beta-D-glucosyl-[(1-&gt;4)-beta-D-glucosyl]n-1 + [(1-&gt;4)-beta-D-glucosyl]m + acceptor + H2O.. In terms of biological role, lytic polysaccharide monooxygenase (LPMO) that depolymerizes crystalline and amorphous polysaccharides via the oxidation of scissile alpha- or beta-(1-4)-glycosidic bonds, yielding C1 or C4 oxidation products. Catalysis by LPMOs requires the reduction of the active-site copper from Cu(II) to Cu(I) by a reducing agent and H(2)O(2) or O(2) as a cosubstrate. The polypeptide is AA9 family lytic polysaccharide monooxygenase D (Podospora anserina (strain S / ATCC MYA-4624 / DSM 980 / FGSC 10383) (Pleurage anserina)).